The sequence spans 545 residues: Calcium-binding mitochondrial carrier SAL1 (545 aa).

An EF-hand 1 domain is found at 11 to 46 (QRDIRYACLFKELDVKGNGQVTLDNLISAFEKNDHP). Lys65, Asp70, Asp93, Asp95, Asp97, Lys99, and Glu104 together coordinate Ca(2+). EF-hand domains are found at residues 80-115 (NAES…LDNQ), 120-155 (NELN…RGQA), and 156-191 (SHKK…VPRK). Ca(2+) contacts are provided by Thr161 and Ser166. 3 Solcar repeats span residues 225-332 (IRGF…TKKI), 345-434 (LSKF…LKKW), and 452-541 (LSNL…LKKF). A run of 6 helical transmembrane segments spans residues 231-248 (FIAG…TAPF), 307-326 (GNGL…FGSF), 355-368 (GLAG…VYPI), 409-428 (GVTV…LGTF), 458-475 (LPMG…VYPI), and 516-535 (GLVP…YLCY).

The protein belongs to the mitochondrial carrier (TC 2.A.29) family.

The protein resides in the mitochondrion inner membrane. Functionally, calcium-dependent mitochondrial solute carrier. The protein is Calcium-binding mitochondrial carrier SAL1 (SAL1) of Saccharomyces cerevisiae (Baker's yeast).